Reading from the N-terminus, the 220-residue chain is MSSNPDLKGSSFTLSVLHLSDDQVENAVSFLQEKVNQAPTFFAAAPVVINISKVAGDIDFLQLKEGISQAGMIPVGVAGCSDKRMQNLAKEAGFAVMTASKSPSQAPAKMAPIKVVRTPIRSGQQVYAKDGDLLILSHVSAGAEVIADGSIHIHGTLRGRAIAGASGQTEAKIICNDLQAELVSIAGNYWLSDQIESEYWQKKTMFSMANDVLHVDVLAI.

This sequence belongs to the MinC family. As to quaternary structure, interacts with MinD and FtsZ.

In terms of biological role, cell division inhibitor that blocks the formation of polar Z ring septums. Rapidly oscillates between the poles of the cell to destabilize FtsZ filaments that have formed before they mature into polar Z rings. Prevents FtsZ polymerization. This chain is Probable septum site-determining protein MinC, found in Vibrio atlanticus (strain LGP32) (Vibrio splendidus (strain Mel32)).